Reading from the N-terminus, the 389-residue chain is MPLPTNQLRLAMVAGEPSGDLLAASLLGGLRERLPESAQYYGIGGQRMIAQGFDSHWQMDKLTVRGYVEALGQIPEILRIRGELKRQLLAERPDAFIGVDAPDFNFSVEQAARDAGIPSIHFVCPSIWAWRGGRIKKIAKSVDHMLCLFPFEPAILDKAGVASTYVGHPLADDIPLEPDTHGARIALGLPADGPVIAVLPGSRRSEIALIGPTFFAAMALMQQREPGVRFVMPAATPALRELLQPLVDAHPQLALTITDGRSQVAMTAADAILVKSGTVTLEAALLKKPMVISYKVPWLTGQIMRRQGYLPYVGLPNILAGRFVVPELLQHFATPEALADATLTQLRDDANRRTLTEVFTEMHLSLRQNTAAKAAEAVVRVLEQRKGRA.

This sequence belongs to the LpxB family.

It catalyses the reaction a lipid X + a UDP-2-N,3-O-bis[(3R)-3-hydroxyacyl]-alpha-D-glucosamine = a lipid A disaccharide + UDP + H(+). It functions in the pathway bacterial outer membrane biogenesis; LPS lipid A biosynthesis. Functionally, condensation of UDP-2,3-diacylglucosamine and 2,3-diacylglucosamine-1-phosphate to form lipid A disaccharide, a precursor of lipid A, a phosphorylated glycolipid that anchors the lipopolysaccharide to the outer membrane of the cell. This is Lipid-A-disaccharide synthase from Burkholderia cenocepacia (strain ATCC BAA-245 / DSM 16553 / LMG 16656 / NCTC 13227 / J2315 / CF5610) (Burkholderia cepacia (strain J2315)).